The sequence spans 87 residues: Small ribosomal subunit protein uS17 (87 aa).

It belongs to the universal ribosomal protein uS17 family. Part of the 30S ribosomal subunit.

In terms of biological role, one of the primary rRNA binding proteins, it binds specifically to the 5'-end of 16S ribosomal RNA. The polypeptide is Small ribosomal subunit protein uS17 (Dichelobacter nodosus (strain VCS1703A)).